Here is a 282-residue protein sequence, read N- to C-terminus: MSRQTATALPTGTSKCPPSQRVPALTGTTASNNDLASLFECPVCFDYVLPPILQCQSGHLVCSNCRPKLTCCPTCRGPLGSIRNLAMEKVANSVLFPCKYASSGCEITLPHTEKAEHEELCEFRPYSCPCPGASCKWQGSLDAVMPHLMHQHKSITTLQGEDIVFLATDINLPGAVDWVMMQSCFGFHFMLVLEKQEKYDGHQQFFAIVQLIGTRKQAENFAYRLELNGHRRRLTWEATPRSIHEGIATAIMNSDCLVFDTSIAQLFAENGNLGINVTISMC.

The span at 1–17 shows a compositional bias: polar residues; sequence MSRQTATALPTGTSKCP. The segment at 1–22 is disordered; sequence MSRQTATALPTGTSKCPPSQRV. Residue Ser19 is modified to Phosphoserine; by ATM and ATR. An RING-type zinc finger spans residues 41-76; the sequence is CPVCFDYVLPPILQCQSGHLVCSNCRPKLTCCPTCR. The segment at 90-282 is SBD; that stretch reads VANSVLFPCK…LGINVTISMC (193 aa). The segment at 93–153 adopts an SIAH-type zinc-finger fold; the sequence is SVLFPCKYAS…VMPHLMHQHK (61 aa). Residues Cys98, Cys105, His117, Cys121, Cys128, Cys135, His147, and His152 each contribute to the Zn(2+) site.

Belongs to the SINA (Seven in absentia) family. As to quaternary structure, homodimer. Component of some large E3 complex composed of UBE2D1, SIAH1, CACYBP/SIP, SKP1, APC and TBL1X. Interacts with UBE2I. Interacts with alpha-tubulin. Interacts with PEG10, which may inhibit its activity. Interacts with PEG3 and HIPK2. Interacts with group 1 glutamate receptors GRM1 and GRM5. Interacts with DAB1, which may inhibit its activity. Interacts with UBE2E2. Interacts with SNCAIP. Interacts with HIPK2; the interaction is promoted by DAZAP2 and results in SIAH1-mediated ubiquitination and subsequent proteasomal degradation of HIPK2. Interacts with DAZAP2; the interaction is decreased following phosphorylation of DAZAP2 by HIPK2. Interacts with GAPDH; leading to stabilize SIAH1. Interacts with Bassoon/BSN and Piccolo/PLCO; these interactions negatively regulate SIAH1 E3 ligase activity. Interacts with DCC. Interacts with AXIN1; catalyzes AXIN1 ubiquitination and subsequent proteasome-mediated ubiquitin-dependent degradation. Phosphorylated on Ser-19 by ATM and ATR. This phosphorylation disrupts SIAH1 interaction with HIPK2, and subsequent proteasomal degradation of HIPK2.

Its subcellular location is the cytoplasm. It localises to the nucleus. The enzyme catalyses S-ubiquitinyl-[E2 ubiquitin-conjugating enzyme]-L-cysteine + [acceptor protein]-L-lysine = [E2 ubiquitin-conjugating enzyme]-L-cysteine + N(6)-ubiquitinyl-[acceptor protein]-L-lysine.. Its pathway is protein modification; protein ubiquitination. Its function is as follows. E3 ubiquitin-protein ligase that mediates ubiquitination and subsequent proteasomal degradation of target proteins. E3 ubiquitin ligases accept ubiquitin from an E2 ubiquitin-conjugating enzyme in the form of a thioester and then directly transfers the ubiquitin to targeted substrates. Mediates E3 ubiquitin ligase activity either through direct binding to substrates or by functioning as the essential RING domain subunit of larger E3 complexes. Triggers the ubiquitin-mediated degradation of many substrates, including proteins involved in transcription regulation (ELL2, MYB, POU2AF1, PML and RBBP8), a cell surface receptor (DCC), cytoplasmic signal transduction molecules (KLF10/TIEG1 and NUMB), an antiapoptotic protein (BAG1), a microtubule motor protein (KIF22), a protein involved in synaptic vesicle function in neurons (SYP), a structural protein (CTNNB1) and SNCAIP. Confers constitutive instability to HIPK2 through proteasomal degradation. It is thereby involved in many cellular processes such as apoptosis, tumor suppression, cell cycle, axon guidance, transcription, spermatogenesis and TNF-alpha signaling. Has some overlapping function with SIAH2. Induces apoptosis in cooperation with PEG3. Upon nitric oxid (NO) generation that follows apoptotic stimulation, interacts with S-nitrosylated GAPDH, mediating the translocation of GAPDH to the nucleus. GAPDH acts as a stabilizer of SIAH1, facilitating the degradation of nuclear proteins. Mediates ubiquitination and degradation of EGLN2 and EGLN3 in response to the unfolded protein response (UPR), leading to their degradation and subsequent stabilization of ATF4. Also part of the Wnt signaling pathway in which it mediates the Wnt-induced ubiquitin-mediated proteasomal degradation of AXIN1. In Rattus norvegicus (Rat), this protein is E3 ubiquitin-protein ligase SIAH1 (Siah1).